A 303-amino-acid chain; its full sequence is N-acetyl-D-glucosamine kinase (303 aa).

ATP contacts are provided by residues 4–11 (GFDIGGTK) and 133–140 (GVGGGLVL). 4 residues coordinate Zn(2+): His157, Cys177, Cys179, and Cys184.

The protein belongs to the ROK (NagC/XylR) family. NagK subfamily.

It catalyses the reaction N-acetyl-D-glucosamine + ATP = N-acetyl-D-glucosamine 6-phosphate + ADP + H(+). It functions in the pathway cell wall biogenesis; peptidoglycan recycling. Functionally, catalyzes the phosphorylation of N-acetyl-D-glucosamine (GlcNAc) derived from cell-wall degradation, yielding GlcNAc-6-P. This Salmonella paratyphi A (strain ATCC 9150 / SARB42) protein is N-acetyl-D-glucosamine kinase.